The chain runs to 252 residues: 3-dehydroquinate dehydratase (252 aa).

Residues 46–48 (EWR) and arginine 82 contribute to the 3-dehydroquinate site. Catalysis depends on histidine 143, which acts as the Proton donor/acceptor. Lysine 170 (schiff-base intermediate with substrate) is an active-site residue. 3-dehydroquinate contacts are provided by arginine 212, serine 231, and glutamine 235.

It belongs to the type-I 3-dehydroquinase family. Homodimer.

It carries out the reaction 3-dehydroquinate = 3-dehydroshikimate + H2O. It participates in metabolic intermediate biosynthesis; chorismate biosynthesis; chorismate from D-erythrose 4-phosphate and phosphoenolpyruvate: step 3/7. In terms of biological role, involved in the third step of the chorismate pathway, which leads to the biosynthesis of aromatic amino acids. Catalyzes the cis-dehydration of 3-dehydroquinate (DHQ) and introduces the first double bond of the aromatic ring to yield 3-dehydroshikimate. In Listeria monocytogenes serotype 4b (strain CLIP80459), this protein is 3-dehydroquinate dehydratase.